Here is a 178-residue protein sequence, read N- to C-terminus: Caveolin-1 (178 aa).

Ser2 carries the N-acetylserine modification. A Phosphoserine modification is found at Ser2. Positions 2-94 are required for homooligomerization; sequence SGGKYVDSEG…WKASFTTFTV (93 aa). The Cytoplasmic segment spans residues 2–104; that stretch reads SGGKYVDSEG…TKYWFYRLLS (103 aa). Lys5 carries the post-translational modification N6-acetyllysine; alternate. Lys5 is covalently cross-linked (Glycyl lysine isopeptide (Lys-Gly) (interchain with G-Cter in ubiquitin); alternate). Residue Tyr6 is modified to Phosphotyrosine. Ser9 bears the Phosphoserine mark. Tyr14 is modified (phosphotyrosine; by ABL1). The residue at position 25 (Tyr25) is a Phosphotyrosine. Residues Lys26 and Lys30 each participate in a glycyl lysine isopeptide (Lys-Gly) (interchain with G-Cter in ubiquitin) cross-link. At Ser37 the chain carries Phosphoserine. Glycyl lysine isopeptide (Lys-Gly) (interchain with G-Cter in ubiquitin) cross-links involve residues Lys39, Lys47, and Lys57. An interaction with CAVIN3 region spans residues 82–94; the sequence is DGIWKASFTTFTV. The segment at residues 105–125 is an intramembrane region (helical); it reads ALFGIPMALIWGIYFAILSFL. Over 126-178 the chain is Cytoplasmic; it reads HIWAVVPCIKSFLIEIQCISRVYSIYVHTVCDPLFEAVGKIFSNVRINLQKEI. The tract at residues 131 to 142 is interacts with SPRY1, SPRY2, SPRY3 and SPRY4; the sequence is VPCIKSFLIEIQ. Residues Cys133, Cys143, and Cys156 are each lipidated (S-palmitoyl cysteine). An interacts with SPRY1, SPRY2, and SPRY4 region spans residues 149–160; the sequence is SIYVHTVCDPLF. Residues 167–178 are interacts with SPRY1, SPRY2, SPRY3 and SPRY4; sequence FSNVRINLQKEI.

It belongs to the caveolin family. In terms of assembly, homooligomer. Interacts with GLIPR2. Interacts with NOSTRIN. Interacts with SNAP25 and STX1A. Interacts (via the N-terminus) with DPP4; the interaction is direct. Interacts with CTNNB1, CDH1 and JUP. Interacts with PACSIN2; this interaction induces membrane tubulation. Interacts with SLC7A9. Interacts with BMX and BTK. Interacts with TGFBR1. Interacts with CAVIN3 (via leucine-zipper domain) in a cholesterol-sensitive manner. Interacts with CAVIN1. Interacts with EHD2 in a cholesterol-dependent manner. Forms a ternary complex with UBXN6 and VCP; mediates CAV1 targeting to lysosomes for degradation. Interacts with ABCG1; this interaction regulates ABCG1-mediated cholesterol efflux. Interacts with NEU3; this interaction enhances NEU3 sialidase activity within caveola. Interacts (via C-terminus) with SPRY1, SPRY2 (via C-terminus), SPRY3, and SPRY4. Interacts with IGFBP5; this interaction allows trafficking of IGFBP5 from the plasma membrane to the nucleus. Post-translationally, phosphorylated at Tyr-14 by ABL1 in response to oxidative stress. In terms of processing, ubiquitinated. Undergo monoubiquitination and multi- and/or polyubiquitination. Monoubiquitination of N-terminal lysines promotes integration in a ternary complex with UBXN6 and VCP which promotes oligomeric CAV1 targeting to lysosomes for degradation. Ubiquitinated by ZNRF1; leading to degradation and modulation of the TLR4-mediated immune response.

It localises to the golgi apparatus membrane. The protein localises to the cell membrane. Its subcellular location is the membrane. The protein resides in the caveola. It is found in the membrane raft. In terms of biological role, may act as a scaffolding protein within caveolar membranes. Forms a stable heterooligomeric complex with CAV2 that targets to lipid rafts and drives caveolae formation. Mediates the recruitment of CAVIN proteins (CAVIN1/2/3/4) to the caveolae. Interacts directly with G-protein alpha subunits and can functionally regulate their activity. Involved in the costimulatory signal essential for T-cell receptor (TCR)-mediated T-cell activation. Its binding to DPP4 induces T-cell proliferation and NF-kappa-B activation in a T-cell receptor/CD3-dependent manner. Recruits CTNNB1 to caveolar membranes and may regulate CTNNB1-mediated signaling through the Wnt pathway. Negatively regulates TGFB1-mediated activation of SMAD2/3 by mediating the internalization of TGFBR1 from membrane rafts leading to its subsequent degradation. Binds 20(S)-hydroxycholesterol (20(S)-OHC). The polypeptide is Caveolin-1 (CAV1) (Pongo abelii (Sumatran orangutan)).